The sequence spans 190 residues: dCTP deaminase (190 aa).

113 to 118 serves as a coordination point for dCTP; sequence KSTYAR. The active-site Proton donor/acceptor is the glutamate 139. Glutamine 158, tyrosine 172, lysine 181, and glutamine 182 together coordinate dCTP.

This sequence belongs to the dCTP deaminase family. As to quaternary structure, homotrimer.

The enzyme catalyses dCTP + H2O + H(+) = dUTP + NH4(+). Its pathway is pyrimidine metabolism; dUMP biosynthesis; dUMP from dCTP (dUTP route): step 1/2. In terms of biological role, catalyzes the deamination of dCTP to dUTP. This is dCTP deaminase from Chlamydia caviae (strain ATCC VR-813 / DSM 19441 / 03DC25 / GPIC) (Chlamydophila caviae).